The sequence spans 446 residues: Putative diacyglycerol O-acyltransferase MT3481 (446 aa).

H129 functions as the Proton acceptor in the catalytic mechanism. The tract at residues S425–H446 is disordered.

This sequence belongs to the long-chain O-acyltransferase family.

The catalysed reaction is an acyl-CoA + a 1,2-diacyl-sn-glycerol = a triacyl-sn-glycerol + CoA. Its pathway is glycerolipid metabolism; triacylglycerol biosynthesis. This Mycobacterium tuberculosis (strain CDC 1551 / Oshkosh) protein is Putative diacyglycerol O-acyltransferase MT3481.